A 279-amino-acid polypeptide reads, in one-letter code: Zinc-finger homeodomain protein 1 (279 aa).

Acidic residues predominate over residues 1-13 (MDFDDHDDGDEEM). The segment at 1 to 47 (MDFDDHDDGDEEMPPMPVSSSYETPPQHGLAGGGMAPKPPGEIGSHV) is disordered. A ZF-HD dimerization-type; degenerate zinc finger spans residues 57–106 (YRECLKNHAVGIGGHAVDGCGEFMAAGEEGTIDALRCAACNCHRNFHRKE). The interval 157–191 (AAAAAAGGHPQRPLALPSTSHSGRDDGDDLSGMVG) is disordered. Positions 215–278 (KKRFRTKFTQ…NNKHTLGKKL (64 aa)) form a DNA-binding region, homeobox.

Homo- and heterodimer with other ZFHD proteins.

It is found in the nucleus. Putative transcription factor. The protein is Zinc-finger homeodomain protein 1 (ZHD1) of Oryza sativa subsp. indica (Rice).